We begin with the raw amino-acid sequence, 154 residues long: Fimbrial protein (154 aa).

The propeptide at 1–6 (MKAQKG) is leader sequence. N-methylphenylalanine is present on Phe-7. A helical membrane pass occupies residues 7–27 (FTLIELMIVVAIIGILAAIAI). Cys-133 and Cys-151 are joined by a disulfide.

The protein belongs to the N-Me-Phe pilin family. As to quaternary structure, the pili are polar flexible filaments of about 5.4 nanometers diameter and 2.5 micrometers average length; they consist of only a single polypeptide chain arranged in a helical configuration of five subunits per turn in the assembled pilus.

Its subcellular location is the fimbrium. It localises to the membrane. This Pseudomonas aeruginosa protein is Fimbrial protein (pilA).